The following is a 123-amino-acid chain: Small ribosomal subunit protein uS12 (123 aa).

Position 89 is a 3-methylthioaspartic acid (Asp89). The interval 101–123 (SLDTSGVKDRKQGRSKYGAKRPK) is disordered. A compositionally biased stretch (basic residues) spans 113–123 (GRSKYGAKRPK).

It belongs to the universal ribosomal protein uS12 family. Part of the 30S ribosomal subunit. Contacts proteins S8 and S17. May interact with IF1 in the 30S initiation complex.

Its function is as follows. With S4 and S5 plays an important role in translational accuracy. Interacts with and stabilizes bases of the 16S rRNA that are involved in tRNA selection in the A site and with the mRNA backbone. Located at the interface of the 30S and 50S subunits, it traverses the body of the 30S subunit contacting proteins on the other side and probably holding the rRNA structure together. The combined cluster of proteins S8, S12 and S17 appears to hold together the shoulder and platform of the 30S subunit. This chain is Small ribosomal subunit protein uS12, found in Azotobacter vinelandii (strain DJ / ATCC BAA-1303).